Reading from the N-terminus, the 351-residue chain is S-adenosylmethionine:tRNA ribosyltransferase-isomerase (351 aa).

It belongs to the QueA family. In terms of assembly, monomer.

The protein resides in the cytoplasm. The enzyme catalyses 7-aminomethyl-7-carbaguanosine(34) in tRNA + S-adenosyl-L-methionine = epoxyqueuosine(34) in tRNA + adenine + L-methionine + 2 H(+). The protein operates within tRNA modification; tRNA-queuosine biosynthesis. Functionally, transfers and isomerizes the ribose moiety from AdoMet to the 7-aminomethyl group of 7-deazaguanine (preQ1-tRNA) to give epoxyqueuosine (oQ-tRNA). This Roseobacter denitrificans (strain ATCC 33942 / OCh 114) (Erythrobacter sp. (strain OCh 114)) protein is S-adenosylmethionine:tRNA ribosyltransferase-isomerase.